A 119-amino-acid chain; its full sequence is Flagellar transcriptional regulator FlhD (119 aa).

This sequence belongs to the FlhD family. In terms of assembly, homodimer; disulfide-linked. Forms a heterohexamer composed of two FlhC and four FlhD subunits. Each FlhC binds a FlhD dimer, forming a heterotrimer, and a hexamer assembles by dimerization of two heterotrimers.

Its subcellular location is the cytoplasm. Its function is as follows. Functions in complex with FlhC as a master transcriptional regulator that regulates transcription of several flagellar and non-flagellar operons by binding to their promoter region. Activates expression of class 2 flagellar genes, including fliA, which is a flagellum-specific sigma factor that turns on the class 3 genes. Also regulates genes whose products function in a variety of physiological pathways. This chain is Flagellar transcriptional regulator FlhD, found in Cronobacter sakazakii (strain ATCC BAA-894) (Enterobacter sakazakii).